Here is a 650-residue protein sequence, read N- to C-terminus: DNA gyrase subunit B (650 aa).

One can recognise a Toprim domain in the interval 429-543 (NELFIVEGDS…AGYVYIAQPP (115 aa)). 3 residues coordinate Mg(2+): E435, D508, and D510.

This sequence belongs to the type II topoisomerase GyrB family. As to quaternary structure, heterotetramer, composed of two GyrA and two GyrB chains. In the heterotetramer, GyrA contains the active site tyrosine that forms a transient covalent intermediate with DNA, while GyrB binds cofactors and catalyzes ATP hydrolysis. Mg(2+) serves as cofactor. Mn(2+) is required as a cofactor. It depends on Ca(2+) as a cofactor.

The protein resides in the cytoplasm. It catalyses the reaction ATP-dependent breakage, passage and rejoining of double-stranded DNA.. Its function is as follows. A type II topoisomerase that negatively supercoils closed circular double-stranded (ds) DNA in an ATP-dependent manner to modulate DNA topology and maintain chromosomes in an underwound state. Negative supercoiling favors strand separation, and DNA replication, transcription, recombination and repair, all of which involve strand separation. Also able to catalyze the interconversion of other topological isomers of dsDNA rings, including catenanes and knotted rings. Type II topoisomerases break and join 2 DNA strands simultaneously in an ATP-dependent manner. The chain is DNA gyrase subunit B from Streptococcus pyogenes serotype M18 (strain MGAS8232).